The sequence spans 201 residues: Ribosomal RNA small subunit methyltransferase G (201 aa).

S-adenosyl-L-methionine is bound by residues G71, F76, 120 to 121 (LE), and R134.

This sequence belongs to the methyltransferase superfamily. RNA methyltransferase RsmG family.

It is found in the cytoplasm. The enzyme catalyses guanosine(527) in 16S rRNA + S-adenosyl-L-methionine = N(7)-methylguanosine(527) in 16S rRNA + S-adenosyl-L-homocysteine. Functionally, specifically methylates the N7 position of guanine in position 527 of 16S rRNA. This is Ribosomal RNA small subunit methyltransferase G from Rhodospirillum rubrum (strain ATCC 11170 / ATH 1.1.1 / DSM 467 / LMG 4362 / NCIMB 8255 / S1).